The sequence spans 55 residues: Spermatid nuclear transition protein 1 (55 aa).

Positions 1-42 are enriched in basic residues; the sequence is MSTSRKLKSHGMRRSKSRSPHKGVKRGGSKRKYRKGNLKSRK. The interval 1–55 is disordered; it reads MSTSRKLKSHGMRRSKSRSPHKGVKRGGSKRKYRKGNLKSRKRGDDANRNYRSHL. A phosphoserine mark is found at Ser9 and Ser40.

Belongs to the nuclear transition protein 1 family. As to expression, expressed by spermatids (at protein level).

The protein resides in the nucleus. It localises to the chromosome. Plays a key role in the replacement of histones to protamine in the elongating spermatids of mammals. In condensing spermatids, loaded onto the nucleosomes, where it promotes the recruitment and processing of protamines, which are responsible for histone eviction. The sequence is that of Spermatid nuclear transition protein 1 (TNP1) from Homo sapiens (Human).